The primary structure comprises 283 residues: 4-diphosphocytidyl-2-C-methyl-D-erythritol kinase (283 aa).

Residue lysine 10 is part of the active site. Residue 99–109 participates in ATP binding; that stretch reads PMGGGLGGGSS. Aspartate 141 is an active-site residue.

Belongs to the GHMP kinase family. IspE subfamily. In terms of assembly, homodimer.

The catalysed reaction is 4-CDP-2-C-methyl-D-erythritol + ATP = 4-CDP-2-C-methyl-D-erythritol 2-phosphate + ADP + H(+). It functions in the pathway isoprenoid biosynthesis; isopentenyl diphosphate biosynthesis via DXP pathway; isopentenyl diphosphate from 1-deoxy-D-xylulose 5-phosphate: step 3/6. Catalyzes the phosphorylation of the position 2 hydroxy group of 4-diphosphocytidyl-2C-methyl-D-erythritol. The protein is 4-diphosphocytidyl-2-C-methyl-D-erythritol kinase of Citrobacter koseri (strain ATCC BAA-895 / CDC 4225-83 / SGSC4696).